A 288-amino-acid polypeptide reads, in one-letter code: Ribosomal RNA small subunit methyltransferase I (288 aa).

It belongs to the methyltransferase superfamily. RsmI family.

Its subcellular location is the cytoplasm. It carries out the reaction cytidine(1402) in 16S rRNA + S-adenosyl-L-methionine = 2'-O-methylcytidine(1402) in 16S rRNA + S-adenosyl-L-homocysteine + H(+). In terms of biological role, catalyzes the 2'-O-methylation of the ribose of cytidine 1402 (C1402) in 16S rRNA. This is Ribosomal RNA small subunit methyltransferase I from Vibrio cholerae serotype O1 (strain ATCC 39315 / El Tor Inaba N16961).